Reading from the N-terminus, the 840-residue chain is MAAYLFTCSILQTLSEAGKIEIAEDKLLHYLGELPGTPNGPVQLLENICTILEGQGRATHGNVIRHVLNIVVTEQELGGLGISGKSWEEVDEHTLHEIKFLTDAWLTAAESRAAARHLPQPLKQQDTRRLPMNLAEKILAHHAFSVPRRERVVAGDLLRVSIDWVIASELSWVGMKHSVTSLDMKPSAWRNDRFWLSGDHTVDPRTYHDKRVQALIKGLESAKRDLKMTENQGSNYTIMHTEFVRERAEPGMLVLGSDSHTCSAGAVSALAIGLGAGDVMAGLATGETWFKVPECIRINFTGQPAWYIGGKDVILSVLKQLKRNTYAAERIVEFGGAGAKLLSCDARFAISNMCTVRDPNDRPELKPTADDRSTSRNLVLLQAFLFPTVSLNRLSIAAGARYEGASYASTFEIDLGEVEPFIAIYPSPDQVCPVAERTGMRFDGCFIGACTTTEEDLVLAALVLEAGLKRGLTLEKGKRIVVPGSLPIVKNLRALGLLDIYKACGYEQPAPGCSLCLGIGADVAEAGSQWLSSQNRNFQNRMGRGAVGHICSAATVAASSFNMTLTDPCDLLNDVSETTFKEYLARCKVARGGSESKLAGGKQANNVQYIEPCLLGENARSAEGEVPALEAAAVSLDDARLGSINSRIYKLDDYVDTDAIIPAPACVGSPTDEMLGSHCFELTNPDFRDYVRSGHRVIVGGRAFGCGSSREEAPRALKGLGVQCVIARSFAFIFGRNMPNIGMLAIVLTDEAFYKAAQQGENIEVDVEGRVVHVAGQTFPFSLDDMELQLIRNRGLAASYQKLGSKVFAALCQKPAPLPISALADATLAQGGSIGRQMDW.

258–260 provides a ligand contact to substrate; sequence DSH. [4Fe-4S] cluster is bound by residues Cys-450, Cys-513, and Cys-516. Substrate contacts are provided by residues Arg-536, Arg-541, and 709-710; that span reads SR.

It belongs to the aconitase/IPM isomerase family.

Its pathway is mycotoxin biosynthesis. In terms of biological role, aconitase; part of the gene clusters that mediate the biosynthesis of AM-toxins, host-selective toxins (HSTs) causing Alternaria blotch on apple, a worldwide distributed disease. AM-toxins are cyclic depsipeptides containing the 3 residues 2-hydroxy-isovaleric acid (2-HIV), dehydroalanine, L-alanine which are common for all 3 AM-toxins I to III. The fourth precursor is L-alpha-amino-methoxyphenyl-valeric acid (L-Amv) for AM-toxin I, L-alpha-amino-phenyl-valeric acid (L-Apv) for AM-toxin II, and L-alpha-amino-hydroxyphenyl-valeric acid (L-Ahv) for AM-toxin III. AM-toxins have two target sites for affecting susceptible apple cells; they cause invagination of the plasma membrane and electrolyte loss and chloroplast disorganization. The non-ribosomal peptide synthetase AMT1 contains 4 catalytic modules and is responsible for activation of each residue in AM-toxin. The aldo-keto reductase AMT2 catalyzes the conversion of 2-keto-isovaleric acid (2-KIV) to 2-hydroxy-isovaleric acid (2-HIV), one of the precursor residues incorporated by AMT1 during AM-toxin biosynthesis, by reduction of its ketone to an alcohol. The cytochrome P450 monooxygenase AMT3 and the thioesterase AMT4 are also important for AM-toxin production, but their exact function within the AM-toxin biosynthesis are not known yet. Up to 21 proteins (including AMT1 to AMT4) are predicted to be involved in AM-toxin biosynthesis since their expression ishighly up-regulated in AM-toxin-producing cultures. The sequence is that of Aconitase AMT8 from Alternaria alternata (Alternaria rot fungus).